A 43-amino-acid polypeptide reads, in one-letter code: Potassium channel toxin gamma-KTx 4.7 (43 aa).

Disulfide bonds link C5–C23, C11–C34, C20–C39, and C24–C41.

The protein belongs to the ergtoxin family. Gamma-KTx 4 subfamily. As to expression, expressed by the venom gland.

Its subcellular location is the secreted. Functionally, reversibly blocks Kv11/ERG potassium channels. In Centruroides limpidus (Mexican scorpion), this protein is Potassium channel toxin gamma-KTx 4.7.